Here is a 436-residue protein sequence, read N- to C-terminus: Protein arginine methyltransferase NDUFAF7, mitochondrial (436 aa).

Residues 1–41 constitute a mitochondrion transit peptide; sequence MNALVRRCVARAGLPCIWRGKCYSSGNEPAESNQVTPMLRH. The interval 411 to 436 is disordered; that stretch reads GSQERNACQSKTPSSSVAGFDELVWQ. Over residues 413 to 427 the composition is skewed to polar residues; the sequence is QERNACQSKTPSSSV.

It belongs to the NDUFAF7 family. In terms of assembly, interacts with NDUFS2.

The protein resides in the mitochondrion. It catalyses the reaction L-arginyl-[protein] + 2 S-adenosyl-L-methionine = N(omega),N(omega)'-dimethyl-L-arginyl-[protein] + 2 S-adenosyl-L-homocysteine + 2 H(+). Its function is as follows. Arginine methyltransferase involved in the assembly or stability of mitochondrial NADH:ubiquinone oxidoreductase complex (complex I). Acts by mediating symmetric dimethylation of 'Arg-118' of NDUFS2 after it assembles into the complex I, stabilizing the early intermediate complex. The polypeptide is Protein arginine methyltransferase NDUFAF7, mitochondrial (Mus musculus (Mouse)).